A 454-amino-acid polypeptide reads, in one-letter code: MNIKIPRIVIGGTGSGVGKTTIALALTQILRKKGLKVATFKCGPDYLDPTYHSRASQKICHNLDGWLMGKESVLNTFYQACHNVDIVIIEGMMGLFDGHSPNSEIGSTAEIAKWLASPVLVVLDTRGMARTVSAILKGLKIFDPDLNLAGAFANFTGSPSHIQLLKDASTEVPILGGLCKHSEQTFPERHLGLYSASEENVSEEKFNFWGEEGEKSLEVNSILEIANSAPEISIPVSNINTTLKRCKIGIAMDSAFHFYYEENLMRLRQAGAELVFFSPLSDSKLTDVDGLYFGGGYPEVFAPTLSKNKSLLNYIQDLSYKNIPIYAECGGLMYLSKGIKLVEGEFFPMLGLISATSIMEKKLKALGYVEVTTKKETIFGEVGLRFRGHQFRYSDLELDESNPIELVYNLRKRKSDQVSEEGYSKNSILASYIHAHWASNPNLAEGFVQSCLRK.

The GATase cobBQ-type domain occupies 247–442 (KIGIAMDSAF…IHAHWASNPN (196 aa)). The active-site Nucleophile is the C329.

It belongs to the CobB/CbiA family. Requires Mg(2+) as cofactor.

The catalysed reaction is cob(II)yrinate + 2 L-glutamine + 2 ATP + 2 H2O = cob(II)yrinate a,c diamide + 2 L-glutamate + 2 ADP + 2 phosphate + 2 H(+). The protein operates within cofactor biosynthesis; adenosylcobalamin biosynthesis; cob(II)yrinate a,c-diamide from sirohydrochlorin (anaerobic route): step 10/10. Its function is as follows. Catalyzes the ATP-dependent amidation of the two carboxylate groups at positions a and c of cobyrinate, using either L-glutamine or ammonia as the nitrogen source. This Leptospira interrogans serogroup Icterohaemorrhagiae serovar Lai (strain 56601) protein is Cobyrinate a,c-diamide synthase.